Consider the following 252-residue polypeptide: Cell division protein ZapD (252 aa).

This sequence belongs to the ZapD family. In terms of assembly, interacts with FtsZ.

The protein localises to the cytoplasm. Cell division factor that enhances FtsZ-ring assembly. Directly interacts with FtsZ and promotes bundling of FtsZ protofilaments, with a reduction in FtsZ GTPase activity. This Cupriavidus pinatubonensis (strain JMP 134 / LMG 1197) (Cupriavidus necator (strain JMP 134)) protein is Cell division protein ZapD.